The primary structure comprises 422 residues: Protein phosphatase methylesterase 1 (422 aa).

Residues 1-27 (MSDMFRKSVLNKLPHLPPTRAPWADES) form a disordered region. Active-site residues include S207, D234, and H371.

It belongs to the AB hydrolase superfamily.

It carries out the reaction [phosphatase 2A protein]-C-terminal L-leucine methyl ester + H2O = [phosphatase 2A protein]-C-terminal L-leucine + methanol + H(+). Demethylates proteins that have been reversibly carboxymethylated. Demethylates the phosphatase PP2A catalytic subunit. The chain is Protein phosphatase methylesterase 1 (PPE1) from Cryptococcus neoformans var. neoformans serotype D (strain JEC21 / ATCC MYA-565) (Filobasidiella neoformans).